A 302-amino-acid chain; its full sequence is RNA polymerase II holoenzyme cyclin-like subunit (302 aa).

A Cyclin N-terminal domain is found at Q53–S142.

The protein belongs to the cyclin family. Cyclin C subfamily. As to quaternary structure, component of the srb8-11 complex, a regulatory module of the Mediator complex.

The protein localises to the nucleus. Its function is as follows. Component of the srb8-11 complex. The srb8-11 complex is a regulatory module of the Mediator complex which is itself involved in regulation of basal and activated RNA polymerase II-dependent transcription. The srb8-11 complex may be involved in the transcriptional repression of a subset of genes regulated by Mediator. It may inhibit the association of the Mediator complex with RNA polymerase II to form the holoenzyme complex. The srb8-11 complex phosphorylates the C-terminal domain (CTD) of the largest subunit of RNA polymerase II. The sequence is that of RNA polymerase II holoenzyme cyclin-like subunit (ssn8) from Aspergillus clavatus (strain ATCC 1007 / CBS 513.65 / DSM 816 / NCTC 3887 / NRRL 1 / QM 1276 / 107).